The primary structure comprises 84 residues: Small ribosomal subunit protein uS17 (84 aa).

Belongs to the universal ribosomal protein uS17 family. As to quaternary structure, part of the 30S ribosomal subunit.

Functionally, one of the primary rRNA binding proteins, it binds specifically to the 5'-end of 16S ribosomal RNA. In Ureaplasma parvum serovar 3 (strain ATCC 27815 / 27 / NCTC 11736), this protein is Small ribosomal subunit protein uS17.